Consider the following 73-residue polypeptide: Putative membrane protein insertion efficiency factor (73 aa).

It belongs to the UPF0161 family.

It localises to the cell inner membrane. Could be involved in insertion of integral membrane proteins into the membrane. This chain is Putative membrane protein insertion efficiency factor, found in Rickettsia bellii (strain OSU 85-389).